The primary structure comprises 402 residues: 1-deoxy-D-xylulose 5-phosphate reductoisomerase (402 aa).

The NADPH site is built by Thr10, Gly11, Ser12, Ile13, Asn38, and Asn124. Residue Lys125 participates in 1-deoxy-D-xylulose 5-phosphate binding. Glu126 provides a ligand contact to NADPH. Mn(2+) is bound at residue Asp150. 1-deoxy-D-xylulose 5-phosphate-binding residues include Ser151, Glu152, Ser186, and His209. Glu152 is a binding site for Mn(2+). Gly215 lines the NADPH pocket. Ser222, Asn227, Lys228, and Glu231 together coordinate 1-deoxy-D-xylulose 5-phosphate. Glu231 provides a ligand contact to Mn(2+).

This sequence belongs to the DXR family. Mg(2+) is required as a cofactor. It depends on Mn(2+) as a cofactor.

It carries out the reaction 2-C-methyl-D-erythritol 4-phosphate + NADP(+) = 1-deoxy-D-xylulose 5-phosphate + NADPH + H(+). Its pathway is isoprenoid biosynthesis; isopentenyl diphosphate biosynthesis via DXP pathway; isopentenyl diphosphate from 1-deoxy-D-xylulose 5-phosphate: step 1/6. Catalyzes the NADPH-dependent rearrangement and reduction of 1-deoxy-D-xylulose-5-phosphate (DXP) to 2-C-methyl-D-erythritol 4-phosphate (MEP). This chain is 1-deoxy-D-xylulose 5-phosphate reductoisomerase, found in Vibrio vulnificus (strain YJ016).